Reading from the N-terminus, the 314-residue chain is Homoserine O-succinyltransferase (314 aa).

Cys-142 serves as the catalytic Acyl-thioester intermediate. Positions 163 and 192 each coordinate substrate. The Proton acceptor role is filled by His-235. Glu-237 is an active-site residue. Arg-249 is a binding site for substrate.

The protein belongs to the MetA family.

It is found in the cytoplasm. It carries out the reaction L-homoserine + succinyl-CoA = O-succinyl-L-homoserine + CoA. It participates in amino-acid biosynthesis; L-methionine biosynthesis via de novo pathway; O-succinyl-L-homoserine from L-homoserine: step 1/1. Functionally, transfers a succinyl group from succinyl-CoA to L-homoserine, forming succinyl-L-homoserine. This Shewanella pealeana (strain ATCC 700345 / ANG-SQ1) protein is Homoserine O-succinyltransferase.